Here is a 164-residue protein sequence, read N- to C-terminus: Phospholipase A and acyltransferase 4 (164 aa).

The tract at residues 1–40 is essential for its ability regulate keratinocyte differentiation; it reads MASPHQEPKPGDLIEIFRLGYEHWALYIGDGYVIHLAPPS. The Cytoplasmic portion of the chain corresponds to 1–134; the sequence is MASPHQEPKP…SRCKQVEKAK (134 aa). The LRAT domain occupies 13-129; the sequence is LIEIFRLGYE…LRYGKSRCKQ (117 aa). Catalysis depends on residues histidine 23 and histidine 35. Catalysis depends on cysteine 113, which acts as the Acyl-thioester intermediate. Residues 124–164 form an interaction with TGM1 region; sequence KSRCKQVEKAKVEVGVATALGILVVAGCSFAIRRYQKKATA. A helical membrane pass occupies residues 135-155; that stretch reads VEVGVATALGILVVAGCSFAI. Residues 156 to 164 lie on the Lumenal side of the membrane; that stretch reads RRYQKKATA.

It belongs to the H-rev107 family. Interacts with TGM1. Widely expressed.

It is found in the membrane. The enzyme catalyses a 1,2-diacyl-sn-glycero-3-phosphocholine + H2O = a 1-acyl-sn-glycero-3-phosphocholine + a fatty acid + H(+). The catalysed reaction is a 1,2-diacyl-sn-glycero-3-phosphocholine + H2O = a 2-acyl-sn-glycero-3-phosphocholine + a fatty acid + H(+). It catalyses the reaction 1,2-dihexadecanoyl-sn-glycero-3-phosphocholine + H2O = 1-hexadecanoyl-sn-glycero-3-phosphocholine + hexadecanoate + H(+). It carries out the reaction 1,2-dihexadecanoyl-sn-glycero-3-phosphocholine + H2O = 2-hexadecanoyl-sn-glycero-3-phosphocholine + hexadecanoate + H(+). The enzyme catalyses 1-hexadecanoyl-2-(9Z-octadecenoyl)-sn-glycero-3-phosphocholine + H2O = 2-(9Z-octadecenoyl)-sn-glycero-3-phosphocholine + hexadecanoate + H(+). The catalysed reaction is 1-hexadecanoyl-2-(9Z-octadecenoyl)-sn-glycero-3-phosphocholine + H2O = 1-hexadecanoyl-sn-glycero-3-phosphocholine + (9Z)-octadecenoate + H(+). It catalyses the reaction 1-hexadecanoyl-2-(5Z,8Z,11Z,14Z-eicosatetraenoyl)-sn-glycero-3-phosphocholine + H2O = 2-(5Z,8Z,11Z,14Z)-eicosatetraenoyl-sn-glycero-3-phosphocholine + hexadecanoate + H(+). It carries out the reaction 1-hexadecanoyl-2-(9Z,12Z-octadecadienoyl)-sn-glycero-3-phosphoethanolamine + H2O = 1-hexadecanoyl-sn-glycero-3-phosphoethanolamine + (9Z,12Z)-octadecadienoate + H(+). The enzyme catalyses 1-hexadecanoyl-2-(9Z,12Z-octadecadienoyl)-sn-glycero-3-phosphoethanolamine + H2O = 2-(9Z,12Z)-octadecadienoyl-sn-glycero-3-phosphoethanolamine + hexadecanoate + H(+). The catalysed reaction is 1-hexadecanoyl-2-(5Z,8Z,11Z,14Z-eicosatetraenoyl)-sn-glycero-3-phosphoethanolamine + H2O = 2-(5Z,8Z,11Z,14Z)-eicosatetraenoyl-sn-glycero-3-phosphoethanolamine + hexadecanoate + H(+). It catalyses the reaction 1-hexanoyl-2-acyl-sn-glycero-3-phosphocholine + H2O = hexanoate + a 2-acyl-sn-glycero-3-phosphocholine + H(+). It carries out the reaction 1,2-diheptadecanoyl-sn-glycero-3-phosphoethanolamine + 1-(9Z-octadecenoyl)-2-hexadecanoyl-sn-glycero-3-phosphocholine = 1,2-diheptadecanoyl-sn-glycero-3-phospho-N-hexadecanoyl-ethanolamine + 1-(9Z-octadecenoyl)-sn-glycero-3-phosphocholine + H(+). The enzyme catalyses 1,2-diheptadecanoyl-sn-glycero-3-phosphoethanolamine + 1-(9Z-octadecenoyl)-2-hexadecanoyl-sn-glycero-3-phosphocholine = 1,2-diheptadecanoyl-sn-glycero-3-phospho-N-(9Z-octadecenoyl)-ethanolamine + 2-hexadecanoyl-sn-glycero-3-phosphocholine + H(+). Functionally, exhibits both phospholipase A1/2 and acyltransferase activities. Shows phospholipase A1 (PLA1) and A2 (PLA2), catalyzing the calcium-independent release of fatty acids from the sn-1 or sn-2 position of glycerophospholipids. For most substrates, PLA1 activity is much higher than PLA2 activity. Shows O-acyltransferase activity, catalyzing the transfer of a fatty acyl group from glycerophospholipid to the hydroxyl group of lysophospholipid. Shows N-acyltransferase activity, catalyzing the calcium-independent transfer of a fatty acyl group at the sn-1 position of phosphatidylcholine (PC) and other glycerophospholipids to the primary amine of phosphatidylethanolamine (PE), forming N-acylphosphatidylethanolamine (NAPE), which serves as precursor for N-acylethanolamines (NAEs). Promotes keratinocyte differentiation via activation of TGM1. The chain is Phospholipase A and acyltransferase 4 from Homo sapiens (Human).